The following is a 31-amino-acid chain: Cyclotide hyen-J (31 aa).

A cross-link (cyclopeptide (Gly-Asp)) is located at residues 1 to 31; it reads GSVPCGESCVWIPCITSIAGCSCSNKVCYMD. 3 disulfide bridges follow: cysteine 5/cysteine 21, cysteine 9/cysteine 23, and cysteine 14/cysteine 28.

Post-translationally, this is a cyclic peptide. Detected in seeds (at protein level).

Its function is as follows. Probably participates in a plant defense mechanism. The polypeptide is Cyclotide hyen-J (Pigea enneasperma (Spade flower)).